Reading from the N-terminus, the 537-residue chain is Cytochrome P450 monooxygenase ltmQ (537 aa).

A helical membrane pass occupies residues 10–30; the sequence is FPKLNFATIVISGATIIGIIF. Residues asparagine 182, asparagine 188, and asparagine 310 are each glycosylated (N-linked (GlcNAc...) asparagine). Residue cysteine 476 coordinates heme.

The protein belongs to the cytochrome P450 family. Heme serves as cofactor.

It is found in the membrane. The protein operates within secondary metabolite biosynthesis. In terms of biological role, cytochrome P450 monooxygenase; part of the gene clusters that mediates the biosynthesis of lolitrems, indole-diterpene mycotoxins that are potent tremorgens in mammals, and are synthesized by clavicipitaceous fungal endophytes in association with their grass hosts. The geranylgeranyl diphosphate (GGPP) synthase ltmG is proposed to catalyze the first step in lolitrem biosynthesis. LtmG catalyzes a series of iterative condensations of isopentenyl diphosphate (IPP) with dimethylallyl diphosphate (DMAPP), geranyl diphosphate (GPP), and farnesyl diphosphate (FPP), to form GGPP. GGPP then condenses with indole-3-glycerol phosphate to form 3-geranylgeranylindole, an acyclic intermediate, to be incorporated into paxilline. Either ltmG or ltmC could be responsible for this step, as both are putative prenyl transferases. The FAD-dependent monooxygenase ltmM then catalyzes the epoxidation of the two terminal alkenes of the geranylgeranyl moiety, which is subsequently cyclized by ltmB, to paspaline. The cytochrome P450 monooxygenases ltmQ and ltmP can sequentially oxidize paspaline to terpendole E and terpendole F. Alternatively, ltmP converts paspaline to an intermediate which is oxidized by ltmQ to terpendole F. LtmF, ltmK, ltmE and ltmJ appear to be unique to the epichloe endophytes. The prenyltransferase ltmF is involved in the 27-hydroxyl-O-prenylation. The cytochrome P450 monooxygenase ltmK is required for the oxidative acetal ring formation. The multi-functional prenyltransferase ltmE is required for C20- and C21-prenylations of the indole ring of paspalanes and acts together with the cytochrome P450 monooxygenase ltmJ to yield lolitremanes by multiple oxidations and ring closures. The stereoisomer pairs of lolitriol and lolitrem N or lolitrem B and lolitrem F may be attributed to variations in the way in which ring closure can occur under the action of ltmJ. While the major product of this pathway is lolitrem B, the prenyl transferases and cytochrome P450 monooxygenases identified in this pathway have a remarkable versatility in their regio- and stereo-specificities to generate a diverse range of metabolites that are products of a metabolic grid rather than a linear pathway. This Epichloe festucae var. lolii (Neotyphodium lolii) protein is Cytochrome P450 monooxygenase ltmQ.